The following is a 238-amino-acid chain: Large ribosomal subunit protein uL1 (238 aa).

This sequence belongs to the universal ribosomal protein uL1 family. In terms of assembly, part of the 50S ribosomal subunit.

Functionally, binds directly to 23S rRNA. The L1 stalk is quite mobile in the ribosome, and is involved in E site tRNA release. Protein L1 is also a translational repressor protein, it controls the translation of the L11 operon by binding to its mRNA. In Rippkaea orientalis (strain PCC 8801 / RF-1) (Cyanothece sp. (strain PCC 8801)), this protein is Large ribosomal subunit protein uL1.